The chain runs to 475 residues: UDP-N-acetylmuramate--L-alanine ligase (475 aa).

117 to 123 is a binding site for ATP; sequence GTHGKTT.

This sequence belongs to the MurCDEF family.

It localises to the cytoplasm. It catalyses the reaction UDP-N-acetyl-alpha-D-muramate + L-alanine + ATP = UDP-N-acetyl-alpha-D-muramoyl-L-alanine + ADP + phosphate + H(+). It functions in the pathway cell wall biogenesis; peptidoglycan biosynthesis. Cell wall formation. The protein is UDP-N-acetylmuramate--L-alanine ligase of Chlorobaculum tepidum (strain ATCC 49652 / DSM 12025 / NBRC 103806 / TLS) (Chlorobium tepidum).